We begin with the raw amino-acid sequence, 586 residues long: Axin-like protein pry-1 (586 aa).

The segment at 1 to 135 (METHLGWARS…FIEAFNKMSS (135 aa)) is required for interaction with apr-1. The RGS domain occupies 10 to 131 (SLEAVLSDRS…GSEEFIEAFN (122 aa)). 3 disordered regions span residues 137-168 (TADQLPGGSAHHSSHQNTMRRSSGTTSRKSAA), 344-442 (MTDD…DSFA), and 478-501 (TSSLDYKDRRQHRKAPTPKKHSKI). Composition is skewed to polar residues over residues 151 to 168 (HQNTMRRSSGTTSRKSAA) and 368 to 388 (GEGSKNTTLSPTNRAPAQLHN). The span at 421-442 (SQSMCAPSYSSASSSYSRDSFA) shows a compositional bias: low complexity. Over residues 486–501 (RRQHRKAPTPKKHSKI) the composition is skewed to basic residues. The DIX domain maps to 505–586 (LSNLITISYL…FEGRIAAELR (82 aa)).

In terms of assembly, interacts (via N-terminus) with apr-1 (via C-terminus). Interacts with bar-1 (via ARM repeats), gsk-3, and mig-5. In terms of tissue distribution, expressed in hypodermal cells (seam cells) V5 and V6, Q neuroblasts, ventral hypodermal cells P7/8 to P11/12, body wall muscle cells and neurons in the head, the tail and the ventral nerve cord.

It localises to the cell membrane. Its subcellular location is the nucleus. It is found in the cytoplasm. The protein resides in the cell cortex. In terms of biological role, works in parallel with axl-1 in negatively regulating bar-1 signaling in vulval precursor cells and Q neuroblasts. Inhibits Wnt signaling, which affects tissue specific expression of Hox genes, egl-5, lin-39 and mab-5. This in turn affects QR (postembryonic neuroblast) cell migration, vulval cell fate specification, and the development of sensory structures by the seam cell lineage. Has a role in alae V cell patterning, ray formation in the male tail and axon guidance. Does not affect B cell polarity. This chain is Axin-like protein pry-1, found in Caenorhabditis elegans.